Consider the following 396-residue polypeptide: Probable circularly permuted 1,3-beta-glucanase YJL171C (396 aa).

A signal peptide spans 1–19 (MLQSIVLSVCMFMLHTVAA). N-linked (GlcNAc...) asparagine glycosylation is found at asparagine 51, asparagine 99, asparagine 122, asparagine 146, asparagine 174, asparagine 219, and asparagine 249. Positions 259–264 (EYDIFE) match the ExDxxE motif motif. 4 N-linked (GlcNAc...) asparagine glycosylation sites follow: asparagine 267, asparagine 300, asparagine 328, and asparagine 346. Asparagine 368 carries the GPI-anchor amidated asparagine lipid modification. The propeptide at 369–396 (GVALTKMQNGVWYYILAIFTAFTQVVLI) is removed in mature form.

The protein belongs to the PGA52 family. Extensively N-glycosylated.

It is found in the cell membrane. The catalysed reaction is Hydrolysis of (1-&gt;3)-beta-D-glucosidic linkages in (1-&gt;3)-beta-D-glucans.. Functionally, probable circularly permuted 1,3-beta-glucanase involved in cell wall modification through beta-1,3-glucan network alterations such as increased branching or remodeling. The polypeptide is Probable circularly permuted 1,3-beta-glucanase YJL171C (TOH1) (Saccharomyces cerevisiae (strain ATCC 204508 / S288c) (Baker's yeast)).